Reading from the N-terminus, the 391-residue chain is Immunoglobulin heavy constant alpha 2 (391 aa).

Topologically, residues 1-357 are extracellular; that stretch reads ASPTSPKVFP…TPGANLWPTT (357 aa). Ig-like domains lie at 6–98, 112–207, and 215–317; these read PKVF…QDVT, PRLS…ANIT, and PEVH…KTID. A disulfide bridge links cysteine 26 with cysteine 85. Asparagine 47 is a glycosylation site (N-linked (GlcNAc...) asparagine). Residue asparagine 92 is glycosylated (N-linked (GlcNAc...) (complex) asparagine). 2 disulfides stabilise this stretch: cysteine 110–cysteine 167 and cysteine 134–cysteine 191. A glycan (N-linked (GlcNAc...) asparagine) is linked at asparagine 131. Asparagine 205 carries N-linked (GlcNAc...) (complex) asparagine glycosylation. A disulfide bond links cysteine 237 and cysteine 300. Aspartate 327 is a glycosylation site (N-linked (GlcNAc...) (complex) asparagine). The chain crosses the membrane as a helical span at residues 358–379; it reads ITFLTLFLLSLFYSTALTVTSV. Residues 380–391 lie on the Cytoplasmic side of the membrane; it reads RGPSGKREGPQY.

In terms of assembly, immunoglobulins are composed of two identical heavy chains and two identical light chains; disulfide-linked. Monomeric or polymeric. Part of the secretory IgA (sIgA) complex that consists of two, four or five IgA monomers, and two additional non-Ig polypeptides, namely the JCHAIN and the secretory component (the proteolytic product of PIGR).

The protein localises to the secreted. The protein resides in the cell membrane. Constant region of immunoglobulin heavy chains. Immunoglobulins, also known as antibodies, are membrane-bound or secreted glycoproteins produced by B lymphocytes. In the recognition phase of humoral immunity, the membrane-bound immunoglobulins serve as receptors which, upon binding of a specific antigen, trigger the clonal expansion and differentiation of B lymphocytes into immunoglobulins-secreting plasma cells. Secreted immunoglobulins mediate the effector phase of humoral immunity, which results in the elimination of bound antigens. The antigen binding site is formed by the variable domain of one heavy chain, together with that of its associated light chain. Thus, each immunoglobulin has two antigen binding sites with remarkable affinity for a particular antigen. The variable domains are assembled by a process called V-(D)-J rearrangement and can then be subjected to somatic hypermutations which, after exposure to antigen and selection, allow affinity maturation for a particular antigen. Ig alpha is the major immunoglobulin class in body secretions. This is Immunoglobulin heavy constant alpha 2 from Homo sapiens (Human).